The following is a 220-amino-acid chain: ATP-dependent Clp protease proteolytic subunit (220 aa).

The active-site Nucleophile is Ser-125. His-150 is a catalytic residue.

The protein belongs to the peptidase S14 family. As to quaternary structure, fourteen ClpP subunits assemble into 2 heptameric rings which stack back to back to give a disk-like structure with a central cavity, resembling the structure of eukaryotic proteasomes.

Its subcellular location is the cytoplasm. It catalyses the reaction Hydrolysis of proteins to small peptides in the presence of ATP and magnesium. alpha-casein is the usual test substrate. In the absence of ATP, only oligopeptides shorter than five residues are hydrolyzed (such as succinyl-Leu-Tyr-|-NHMec, and Leu-Tyr-Leu-|-Tyr-Trp, in which cleavage of the -Tyr-|-Leu- and -Tyr-|-Trp bonds also occurs).. Functionally, cleaves peptides in various proteins in a process that requires ATP hydrolysis. Has a chymotrypsin-like activity. Plays a major role in the degradation of misfolded proteins. The chain is ATP-dependent Clp protease proteolytic subunit from Bacteroides thetaiotaomicron (strain ATCC 29148 / DSM 2079 / JCM 5827 / CCUG 10774 / NCTC 10582 / VPI-5482 / E50).